The chain runs to 430 residues: Adenosylhomocysteinase (430 aa).

Positions 56, 131, and 156 each coordinate substrate. 157-159 lines the NAD(+) pocket; that stretch reads TTT. Positions 186 and 190 each coordinate substrate. NAD(+) contacts are provided by residues Asn-191, 220–225, Glu-243, Asn-278, 299–301, and Asn-344; these read GFGDVG and IGH.

Belongs to the adenosylhomocysteinase family. NAD(+) is required as a cofactor.

The protein localises to the cytoplasm. It catalyses the reaction S-adenosyl-L-homocysteine + H2O = L-homocysteine + adenosine. The protein operates within amino-acid biosynthesis; L-homocysteine biosynthesis; L-homocysteine from S-adenosyl-L-homocysteine: step 1/1. Functionally, may play a key role in the regulation of the intracellular concentration of adenosylhomocysteine. The chain is Adenosylhomocysteinase from Halorhodospira halophila (strain DSM 244 / SL1) (Ectothiorhodospira halophila (strain DSM 244 / SL1)).